The following is a 445-amino-acid chain: UDP-N-acetylmuramoylalanine--D-glutamate ligase (445 aa).

117-123 (GSNGKTT) contacts ATP.

Belongs to the MurCDEF family.

The protein resides in the cytoplasm. The enzyme catalyses UDP-N-acetyl-alpha-D-muramoyl-L-alanine + D-glutamate + ATP = UDP-N-acetyl-alpha-D-muramoyl-L-alanyl-D-glutamate + ADP + phosphate + H(+). It functions in the pathway cell wall biogenesis; peptidoglycan biosynthesis. Functionally, cell wall formation. Catalyzes the addition of glutamate to the nucleotide precursor UDP-N-acetylmuramoyl-L-alanine (UMA). This chain is UDP-N-acetylmuramoylalanine--D-glutamate ligase, found in Neisseria gonorrhoeae (strain NCCP11945).